Consider the following 241-residue polypeptide: 2-C-methyl-D-erythritol 4-phosphate cytidylyltransferase (241 aa).

The protein belongs to the IspD/TarI cytidylyltransferase family. IspD subfamily.

It catalyses the reaction 2-C-methyl-D-erythritol 4-phosphate + CTP + H(+) = 4-CDP-2-C-methyl-D-erythritol + diphosphate. It functions in the pathway isoprenoid biosynthesis; isopentenyl diphosphate biosynthesis via DXP pathway; isopentenyl diphosphate from 1-deoxy-D-xylulose 5-phosphate: step 2/6. Catalyzes the formation of 4-diphosphocytidyl-2-C-methyl-D-erythritol from CTP and 2-C-methyl-D-erythritol 4-phosphate (MEP). The chain is 2-C-methyl-D-erythritol 4-phosphate cytidylyltransferase from Shewanella denitrificans (strain OS217 / ATCC BAA-1090 / DSM 15013).